A 470-amino-acid chain; its full sequence is Cyclin-B1-3 (470 aa).

The protein belongs to the cyclin family. Cyclin AB subfamily.

The sequence is that of Cyclin-B1-3 (CYCB1-3) from Oryza sativa subsp. japonica (Rice).